Here is a 254-residue protein sequence, read N- to C-terminus: Phosphomannomutase (254 aa).

The active-site Nucleophile is D16. Positions 16 and 18 each coordinate Mg(2+). Residue D18 is the Proton donor/acceptor of the active site. 6 residues coordinate alpha-D-mannose 1-phosphate: R25, R129, R140, R147, S185, and D187. Residues D216, Y228, D230, and T233 each contribute to the Mg(2+) site.

This sequence belongs to the eukaryotic PMM family. In terms of assembly, homodimer.

It is found in the cytoplasm. It catalyses the reaction alpha-D-mannose 1-phosphate = D-mannose 6-phosphate. It participates in nucleotide-sugar biosynthesis; GDP-alpha-D-mannose biosynthesis; alpha-D-mannose 1-phosphate from D-fructose 6-phosphate: step 2/2. Its function is as follows. Involved in the synthesis of the GDP-mannose and dolichol-phosphate-mannose required for a number of critical mannosyl transfer reactions. Required for maintaining N-linked glycoprotein glycosylation at the neuromuscular junction (NMJ) synaptomatrix, and thus acts in multiple pathways that prevent NMJ structural overgrowth, restrict synaptic bouton differentiation, and limit NMJ neurotransmission strength, in order to maintain viability, coordinate movement, and in adults ensure correct wing positioning. Acts in the NMJ trans-synaptic Wg pathway via glycosylation of synaptic Mmp2 which enables dlp/wg signaling during development. In Drosophila melanogaster (Fruit fly), this protein is Phosphomannomutase.